Consider the following 20-residue polypeptide: Protein PR-L5 (20 aa).

This sequence belongs to the BetVI family.

The sequence is that of Protein PR-L5 from Lupinus luteus (European yellow lupine).